The primary structure comprises 106 residues: Iron-sulfur cluster assembly protein CyaY (106 aa).

The protein belongs to the frataxin family.

In terms of biological role, involved in iron-sulfur (Fe-S) cluster assembly. May act as a regulator of Fe-S biogenesis. The protein is Iron-sulfur cluster assembly protein CyaY of Yersinia enterocolitica serotype O:8 / biotype 1B (strain NCTC 13174 / 8081).